The following is a 287-amino-acid chain: Bifunctional protein FolD (287 aa).

NADP(+) is bound by residues Gly-166–Ser-168 and Ile-232.

The protein belongs to the tetrahydrofolate dehydrogenase/cyclohydrolase family. Homodimer.

The catalysed reaction is (6R)-5,10-methylene-5,6,7,8-tetrahydrofolate + NADP(+) = (6R)-5,10-methenyltetrahydrofolate + NADPH. It catalyses the reaction (6R)-5,10-methenyltetrahydrofolate + H2O = (6R)-10-formyltetrahydrofolate + H(+). Its pathway is one-carbon metabolism; tetrahydrofolate interconversion. In terms of biological role, catalyzes the oxidation of 5,10-methylenetetrahydrofolate to 5,10-methenyltetrahydrofolate and then the hydrolysis of 5,10-methenyltetrahydrofolate to 10-formyltetrahydrofolate. The protein is Bifunctional protein FolD of Pectobacterium atrosepticum (strain SCRI 1043 / ATCC BAA-672) (Erwinia carotovora subsp. atroseptica).